Consider the following 324-residue polypeptide: 2-oxoisovalerate dehydrogenase subunit beta (324 aa).

Thiamine diphosphate is bound by residues E29, 58-60 (LSE), Q82, and 86-89 (YIFP). Residues 83–86 (FADY) and H129 each bind substrate. H129 acts as the Proton acceptor in catalysis.

Heterotetramer of two alpha and two beta chains. Directly associated with ODBA in the E1 complex. The cofactor is thiamine diphosphate.

The catalysed reaction is N(6)-[(R)-lipoyl]-L-lysyl-[protein] + 3-methyl-2-oxobutanoate + H(+) = N(6)-[(R)-S(8)-2-methylpropanoyldihydrolipoyl]-L-lysyl-[protein] + CO2. Functionally, the branched-chain alpha-keto dehydrogenase complex catalyzes the overall conversion of alpha-keto acids to acyl-CoA and CO(2). It contains multiple copies of three enzymatic components: branched-chain alpha-keto acid decarboxylase (E1), lipoamide acyltransferase (E2) and lipoamide dehydrogenase (E3). The protein is 2-oxoisovalerate dehydrogenase subunit beta of Thermus thermophilus (strain ATCC BAA-163 / DSM 7039 / HB27).